The sequence spans 161 residues: 6,7-dimethyl-8-ribityllumazine synthase (161 aa).

Residues tryptophan 31, 63–65, and 85–87 each bind 5-amino-6-(D-ribitylamino)uracil; these read SFE and VVI. Residue 90 to 91 coordinates (2S)-2-hydroxy-3-oxobutyl phosphate; the sequence is GT. Histidine 93 serves as the catalytic Proton donor. Residue phenylalanine 118 participates in 5-amino-6-(D-ribitylamino)uracil binding. Residue arginine 132 participates in (2S)-2-hydroxy-3-oxobutyl phosphate binding.

Belongs to the DMRL synthase family.

It catalyses the reaction (2S)-2-hydroxy-3-oxobutyl phosphate + 5-amino-6-(D-ribitylamino)uracil = 6,7-dimethyl-8-(1-D-ribityl)lumazine + phosphate + 2 H2O + H(+). It functions in the pathway cofactor biosynthesis; riboflavin biosynthesis; riboflavin from 2-hydroxy-3-oxobutyl phosphate and 5-amino-6-(D-ribitylamino)uracil: step 1/2. Functionally, catalyzes the formation of 6,7-dimethyl-8-ribityllumazine by condensation of 5-amino-6-(D-ribitylamino)uracil with 3,4-dihydroxy-2-butanone 4-phosphate. This is the penultimate step in the biosynthesis of riboflavin. The chain is 6,7-dimethyl-8-ribityllumazine synthase from Arthrobacter sp. (strain FB24).